Consider the following 137-residue polypeptide: Large ribosomal subunit protein uL16 (137 aa).

The segment at 1-22 is disordered; the sequence is MLQPKRTKFRKVQKGRNRGLAH.

This sequence belongs to the universal ribosomal protein uL16 family. As to quaternary structure, part of the 50S ribosomal subunit.

Functionally, binds 23S rRNA and is also seen to make contacts with the A and possibly P site tRNAs. The sequence is that of Large ribosomal subunit protein uL16 from Chromohalobacter salexigens (strain ATCC BAA-138 / DSM 3043 / CIP 106854 / NCIMB 13768 / 1H11).